Here is a 21-residue protein sequence, read N- to C-terminus: 78 kDa dihydrolipoyllysine-residue acetyltransferase component of pyruvate dehydrogenase complex (21 aa).

This sequence belongs to the 2-oxoacid dehydrogenase family. Forms a 60-polypeptide structural core. (R)-lipoate is required as a cofactor.

It is found in the mitochondrion matrix. The catalysed reaction is N(6)-[(R)-dihydrolipoyl]-L-lysyl-[protein] + acetyl-CoA = N(6)-[(R)-S(8)-acetyldihydrolipoyl]-L-lysyl-[protein] + CoA. Its function is as follows. The pyruvate dehydrogenase complex catalyzes the overall conversion of pyruvate to acetyl-CoA and CO(2). It contains multiple copies of three enzymatic components: pyruvate dehydrogenase (E1), dihydrolipoamide acetyltransferase (E2) and lipoamide dehydrogenase (E3). The protein is 78 kDa dihydrolipoyllysine-residue acetyltransferase component of pyruvate dehydrogenase complex of Solanum tuberosum (Potato).